The sequence spans 473 residues: Photosystem II CP43 reaction center protein (473 aa).

A propeptide spanning residues 1 to 14 (MKILYSLRRYFHVE) is cleaved from the precursor. Thr15 bears the N-acetylthreonine mark. A Phosphothreonine modification is found at Thr15. The next 5 helical transmembrane spans lie at 69–93 (LFEV…PHLA), 134–155 (LIGP…KDKN), 178–200 (KAIW…RKIT), 255–275 (KPFA…LSYS), and 291–312 (WFNN…ASQA). Glu367 lines the [CaMn4O5] cluster pocket. Residues 447 to 471 (RARAAAAGFEKGIDRDSEPVLYMEP) form a helical membrane-spanning segment.

Belongs to the PsbB/PsbC family. PsbC subfamily. As to quaternary structure, PSII is composed of 1 copy each of membrane proteins PsbA, PsbB, PsbC, PsbD, PsbE, PsbF, PsbH, PsbI, PsbJ, PsbK, PsbL, PsbM, PsbT, PsbX, PsbY, PsbZ, Psb30/Ycf12, at least 3 peripheral proteins of the oxygen-evolving complex and a large number of cofactors. It forms dimeric complexes. It depends on Binds multiple chlorophylls and provides some of the ligands for the Ca-4Mn-5O cluster of the oxygen-evolving complex. It may also provide a ligand for a Cl- that is required for oxygen evolution. PSII binds additional chlorophylls, carotenoids and specific lipids. as a cofactor.

It localises to the plastid. It is found in the chloroplast thylakoid membrane. Its function is as follows. One of the components of the core complex of photosystem II (PSII). It binds chlorophyll and helps catalyze the primary light-induced photochemical processes of PSII. PSII is a light-driven water:plastoquinone oxidoreductase, using light energy to abstract electrons from H(2)O, generating O(2) and a proton gradient subsequently used for ATP formation. The sequence is that of Photosystem II CP43 reaction center protein from Chara vulgaris (Common stonewort).